Reading from the N-terminus, the 1032-residue chain is Probable ATP-dependent RNA helicase DDX46 (1032 aa).

Positions 1 to 24 (MGRESRHYRKRSASRGRSGSRSRS) are enriched in basic residues. The segment at 1-227 (MGRESRHYRK…TEMEDEELDP (227 aa)) is disordered. G2 carries the N-myristoyl glycine lipid modification. The segment covering 26 to 49 (SPSDKRSKRGDDRRSRSRDRDRRR) has biased composition (basic and acidic residues). Basic residues-rich tracts occupy residues 50-73 (ERSR…RSRS) and 81-103 (ERRR…RRSR). The segment covering 112–200 (KKTENRSRSK…EMKQGKKWSL (89 aa)) has biased composition (basic and acidic residues). Residues 152–197 (DQNKLEEEMRKRKERVEKWREEQRKKAMENIGELKKEIEEMKQGKK) adopt a coiled-coil conformation. K186 is covalently cross-linked (Glycyl lysine isopeptide (Lys-Gly) (interchain with G-Cter in SUMO2)). S199 carries the post-translational modification Phosphoserine. The segment covering 201 to 211 (EDDDDDEDDPA) has biased composition (acidic residues). An N6-acetyllysine modification is found at K263. The residue at position 294 (Y294) is a Phosphotyrosine. S295 and S296 each carry phosphoserine. K325 participates in a covalent cross-link: Glycyl lysine isopeptide (Lys-Gly) (interchain with G-Cter in SUMO2). S346 carries the phosphoserine modification. The Q motif signature appears at 372–400 (KSWVQCGISMKILNSLKKHGYEKPTPIQT). One can recognise a Helicase ATP-binding domain in the interval 403–581 (IPAIMSGRDL…RRILSKPIEV (179 aa)). 416–423 (AKTGSGKT) lines the ATP pocket. The DEAD box signature appears at 529-532 (DEAD). A Helicase C-terminal domain is found at 592 to 753 (DVEQQVIVIE…AVPPDLEKLW (162 aa)). K776 bears the N6-acetyllysine mark. Residue K779 forms a Glycyl lysine isopeptide (Lys-Gly) (interchain with G-Cter in SUMO2) linkage. The residue at position 804 (S804) is a Phosphoserine. N6-acetyllysine is present on K904. Residues K908 and K916 each participate in a glycyl lysine isopeptide (Lys-Gly) (interchain with G-Cter in SUMO2) cross-link. S929 is subject to Phosphoserine.

This sequence belongs to the DEAD box helicase family. DDX46/PRP5 subfamily. As to quaternary structure, component of the 17S U2 SnRNP complex, a ribonucleoprotein complex that contains small nuclear RNA (snRNA) U2 and a number of specific proteins. Within the 17S U2 SnRNP complex, DDX46 is part of the SF3B subcomplex, which is required for 'A' complex assembly formed by the stable binding of U2 snRNP to the branchpoint sequence in pre-mRNA. Recruited to the 17S U2 SnRNP complex following release of DDX42; DDX42 and DDX46 bind the SF3B subcomplex in a competitive manner.

The protein localises to the nucleus speckle. The protein resides in the nucleus. It is found in the cajal body. The catalysed reaction is ATP + H2O = ADP + phosphate + H(+). Its function is as follows. Component of the 17S U2 SnRNP complex of the spliceosome, a large ribonucleoprotein complex that removes introns from transcribed pre-mRNAs. The 17S U2 SnRNP complex (1) directly participates in early spliceosome assembly and (2) mediates recognition of the intron branch site during pre-mRNA splicing by promoting the selection of the pre-mRNA branch-site adenosine, the nucleophile for the first step of splicing. Within the 17S U2 SnRNP complex, DDX46 plays essential roles during assembly of pre-spliceosome and proofreading of the branch site. This chain is Probable ATP-dependent RNA helicase DDX46 (Ddx46), found in Mus musculus (Mouse).